A 146-amino-acid polypeptide reads, in one-letter code: Acetyl-CoA decarbonylase/synthase complex subunit epsilon (146 aa).

This sequence belongs to the CdhB family. In terms of assembly, heterotetramer of two alpha and two epsilon subunits. The ACDS complex is made up of alpha, epsilon, beta, gamma and delta subunits with a probable stoichiometry of (alpha(2)epsilon(2))(4)-beta(8)-(gamma(1)delta(1))(8).

Its function is as follows. Part of a complex that catalyzes the reversible cleavage of acetyl-CoA, allowing autotrophic growth from CO(2). The alpha-epsilon subcomponent functions as a carbon monoxide dehydrogenase. The precise role of the epsilon subunit is unclear; it may have a stabilizing role within the alpha(2)epsilon(2) component and/or be involved in electron transfer to FAD during a potential FAD-mediated CO oxidation. The polypeptide is Acetyl-CoA decarbonylase/synthase complex subunit epsilon (Methanocaldococcus jannaschii (strain ATCC 43067 / DSM 2661 / JAL-1 / JCM 10045 / NBRC 100440) (Methanococcus jannaschii)).